Here is an 842-residue protein sequence, read N- to C-terminus: Pentatricopeptide repeat-containing protein At3g22690 (842 aa).

16 PPR repeats span residues 98–132 (TCFM…GISP), 133–167 (DKYT…GYAK), 168–202 (DLFV…NVVS), 203–234 (WTSM…EVTP), 235–269 (NSVT…GIEV), 270–300 (NDLM…YGAS), 301–335 (NLDL…GVRP), 336–370 (DRIS…GFES), 371–401 (WDNI…MSNK), 402–436 (TVVT…NIVS), 437–463 (WNTI…MQSQ), 469–503 (DGVT…GIQL), 504–534 (DVRL…LTNR), 535–569 (DVSA…GLKP), 570–605 (DGVA…GVSP), and 606–636 (EDVH…MPME). The segment at 641–716 (IWNSLLAACR…PPGTSSIQIR (76 aa)) is type E motif. A type E(+) motif region spans residues 717–747 (GKTHEFTSGDESHPEMPNIEAMLDEVSQRAS). The interval 748–842 (HLGHVPDLSN…QGKCSCGDFW (95 aa)) is type DYW motif.

This sequence belongs to the PPR family. PCMP-H subfamily.

This Arabidopsis thaliana (Mouse-ear cress) protein is Pentatricopeptide repeat-containing protein At3g22690 (PCMP-H56).